The chain runs to 619 residues: Bifunctional glutathionylspermidine synthetase/amidase (619 aa).

The interval 2–195 is gsp amidase; sequence SKGTTSQDAP…LGWMIQTEDT (194 aa). Positions 34 to 176 constitute a Peptidase C51 domain; it reads DPQEYEDDAV…MVVENGCYTL (143 aa). Gln-58 contacts glutathionylspermidine. Cys-59 functions as the S-(gamma-glutamyl-cysteinyl-glycyl)-cysteine intermediate in the catalytic mechanism. Cys-59 carries the cysteine sulfenic acid (-SOH); transient modification. Glutathionylspermidine is bound by residues Arg-64, 78-81, and Asn-149; that span reads VGMA. Positions 196–205 are linker; the sequence is EYSLPQPEIA. Residues 206–619 form a gsp synthetase region; the sequence is GELLKISGAR…DIEPLIVVKK (414 aa). Arg-316 contacts glutathione. 316-318 is an ATP binding site; the sequence is RMD. Mg(2+)-binding residues include Asp-318, Glu-330, and Asn-332. Residue Ser-335 coordinates glutathione. Glu-391 lines the spermidine pocket. Glutathione contacts are provided by Glu-392 and Thr-446. ATP-binding positions include Lys-498, Lys-533, 539–540, 568–571, Gln-582, and 603–605; these read CG, QQLW, and LVI. Asp-610 lines the spermidine pocket.

This sequence in the C-terminal section; belongs to the glutathionylspermidine synthase preATP-grasp family. As to quaternary structure, homodimer. Oxidation of Cys-59 to sulfenic acid during oxidative stress selectively inhibits the amidase activity which leads to a rapid increase in the amounts of intracellular Gsp and Gsp S-thiolated proteins (GspSSPs).

It carries out the reaction spermidine + glutathione + ATP = glutathionylspermidine + ADP + phosphate + H(+). The catalysed reaction is glutathionylspermidine + H2O = spermidine + glutathione. The protein operates within sulfur metabolism; glutathione metabolism. Its pathway is amine and polyamine metabolism; spermidine metabolism. Its activity is regulated as follows. When exposed to oxidative stress, Gsp amidase activity is transiently inhibited in vivo by oxidation of the catalytic Cys-59 thiol to sulfenic acid; this modification does not affect Gsp synthetase activity. Gsp amidase activity is negatively autoregulated by the Gsp synthetase domain, and is activated by the Gsp synthetase substrates, GSH and ATP-Mg(2+); the occupancy of the synthetase active site may initiate communication through the protein as manifest by the release of inhibition of the amidase activity. A tetrahedral phosphonate analog of glutathionylspermidine, designed as a mimic of the proposed tetrahedral intermediate for either reaction, inhibits the synthetase activity (Ki of 10 uM) but does not inhibit the amidase activity. Amidase activity is inhibited by iodoacetamide in vitro. In terms of biological role, catalyzes the formation of an amide bond between glutathione (GSH) and spermidine coupled with hydrolysis of ATP; also catalyzes the opposing reaction, i.e. the hydrolysis of glutathionylspermidine (Gsp) back to glutathione and spermidine. The amidase active site can also hydrolyze Gsp-disulfide (Gsp-S-S-Gsp) to Gsp-SG and Gsp S-thiolated proteins (GspSSPs) to GSH S-thiolated protein (GSSPs). Likely acts synergistically with glutaredoxin to regulate the redox environment of E.coli and defend against oxidative damage. In vitro, the amidase active site also catalyzes hydrolysis of amide and ester derivatives of glutathione (e.g. glutathione ethyl ester and glutathione amide) but lacks activity toward acetylspermidine (N1 and N8) and acetylspermine (N1). This Escherichia coli (strain K12) protein is Bifunctional glutathionylspermidine synthetase/amidase (gss).